An 844-amino-acid polypeptide reads, in one-letter code: Aminopeptidase N (844 aa).

Substrate is bound by residues E120 and 253 to 257 (GAMEN). H289 is a binding site for Zn(2+). E290 serves as the catalytic Proton acceptor. Zn(2+) is bound by residues H293 and E312.

It belongs to the peptidase M1 family. In terms of assembly, monomer. It depends on Zn(2+) as a cofactor.

It is found in the cytoplasm. It carries out the reaction Release of an N-terminal amino acid, Xaa-|-Yaa- from a peptide, amide or arylamide. Xaa is preferably Ala, but may be most amino acids including Pro (slow action). When a terminal hydrophobic residue is followed by a prolyl residue, the two may be released as an intact Xaa-Pro dipeptide.. Its function is as follows. Aminopeptidase N is involved in the degradation of intracellular peptides generated by protein breakdown during normal growth as well as in response to nutrient starvation. The polypeptide is Aminopeptidase N (pepN) (Lactobacillus helveticus (Lactobacillus suntoryeus)).